The chain runs to 156 residues: Transcriptional repressor NrdR (156 aa).

A zinc finger spans residues 3–34 (CPKCSSTHSRVVDSRHADDANAIRRRRECENC). The ATP-cone domain occupies 49-139 (LIVVKKDGTR…VYKEFKDVDQ (91 aa)).

Belongs to the NrdR family. Zn(2+) serves as cofactor.

In terms of biological role, negatively regulates transcription of bacterial ribonucleotide reductase nrd genes and operons by binding to NrdR-boxes. The chain is Transcriptional repressor NrdR from Staphylococcus haemolyticus (strain JCSC1435).